Here is a 266-residue protein sequence, read N- to C-terminus: Ras-like protein family member 12 (266 aa).

GTP-binding positions include 27–34 (GRRGAGKS), 74–78 (DTADL), and 134–137 (NKLD).

This sequence belongs to the small GTPase superfamily. Ras family.

The enzyme catalyses GTP + H2O = GDP + phosphate + H(+). The chain is Ras-like protein family member 12 (Rasl12) from Mus musculus (Mouse).